The following is a 240-amino-acid chain: 2,3,4,5-tetrahydropyridine-2,6-dicarboxylate N-acetyltransferase (240 aa).

Belongs to the transferase hexapeptide repeat family. DapH subfamily.

It catalyses the reaction (S)-2,3,4,5-tetrahydrodipicolinate + acetyl-CoA + H2O = L-2-acetamido-6-oxoheptanedioate + CoA. The protein operates within amino-acid biosynthesis; L-lysine biosynthesis via DAP pathway; LL-2,6-diaminopimelate from (S)-tetrahydrodipicolinate (acetylase route): step 1/3. Functionally, catalyzes the transfer of an acetyl group from acetyl-CoA to tetrahydrodipicolinate. The polypeptide is 2,3,4,5-tetrahydropyridine-2,6-dicarboxylate N-acetyltransferase (Staphylococcus epidermidis (strain ATCC 12228 / FDA PCI 1200)).